Reading from the N-terminus, the 64-residue chain is Prokaryotic ubiquitin-like protein Pup (64 aa).

The span at 1-11 shows a compositional bias: basic and acidic residues; it reads MAQEQTKRTGG. The disordered stretch occupies residues 1-37; sequence MAQEQTKRTGGGDEDDTPGADGAAGQERREKLAEDTD. An ARC ATPase binding region spans residues 21 to 58; sequence DGAAGQERREKLAEDTDDLLDEIDDVLEENAEDFVRAY. Residues 24–52 adopt a coiled-coil conformation; it reads AGQERREKLAEDTDDLLDEIDDVLEENAE. A Deamidated glutamine modification is found at Gln-64. Residue Gln-64 forms an Isoglutamyl lysine isopeptide (Gln-Lys) (interchain with K-? in acceptor proteins) linkage.

It belongs to the prokaryotic ubiquitin-like protein family. In terms of assembly, strongly interacts with the proteasome-associated ATPase ARC through a hydrophobic interface; the interacting region of Pup lies in its C-terminal half. There is one Pup binding site per ARC hexamer ring. Is modified by deamidation of its C-terminal glutamine to glutamate by the deamidase Dop, a prerequisite to the subsequent pupylation process.

The protein operates within protein degradation; proteasomal Pup-dependent pathway. In terms of biological role, protein modifier that is covalently attached to lysine residues of substrate proteins, thereby targeting them for proteasomal degradation. The tagging system is termed pupylation. The polypeptide is Prokaryotic ubiquitin-like protein Pup (Rhodococcus jostii (strain RHA1)).